A 73-amino-acid chain; its full sequence is Large ribosomal subunit protein bL31 (73 aa).

The protein belongs to the bacterial ribosomal protein bL31 family. Type A subfamily. In terms of assembly, part of the 50S ribosomal subunit.

Binds the 23S rRNA. This chain is Large ribosomal subunit protein bL31, found in Ruegeria sp. (strain TM1040) (Silicibacter sp.).